The chain runs to 84 residues: Large ribosomal subunit protein bL27 (84 aa).

Residues 1–22 (MAHKKAGGSTRNGRDSESKRLG) are disordered.

It belongs to the bacterial ribosomal protein bL27 family.

The protein is Large ribosomal subunit protein bL27 of Shewanella woodyi (strain ATCC 51908 / MS32).